Consider the following 574-residue polypeptide: C6 finger transcription factor poxB (574 aa).

Positions 19 to 51 (CDRCRGQKLRCERPVSNSSTTPCRRCLKAHVRC) form a DNA-binding region, zn(2)-C6 fungal-type. Disordered stretches follow at residues 111–133 (PRRL…GRTR), 242–262 (SSLQ…ESRH), and 376–404 (LNQT…SASA).

It localises to the nucleus. Functionally, transcription factor that positively regulates the expression of the gene cluster that mediates the biosynthesis of oxaleimides, cytotoxic compounds containing an unusual disubstituted succinimide moiety. This is C6 finger transcription factor poxB from Penicillium oxalicum.